Consider the following 483-residue polypeptide: Protein PLASTID TRANSCRIPTIONALLY ACTIVE 14 (483 aa).

A chloroplast-targeting transit peptide spans 1 to 62 (MASSVSLQFL…TQPFPLFQSP (62 aa)). The 246-residue stretch at 80 to 325 (YKIGYVRSVR…KGEEMTINYM (246 aa)) folds into the SET domain. Y324 contributes to the S-adenosyl-L-methionine binding site.

This sequence belongs to the class V-like SAM-binding methyltransferase superfamily. As to quaternary structure, component of the transcriptionally active chromosome (TAC) complexes. Interacts with PTAC12/HMR/PAP5 and PTAC7. Binds to SL1/MTERF3. As to expression, mostly expressed in leaves, flowers and seedlings, and, to a lower extent, in stems and roots.

The protein localises to the plastid. It is found in the chloroplast thylakoid. Essential for chloroplast development, especially for thylakoid formation. Involved in plastid gene expression, probably by maintaining plastid-encoded RNA polymerase (PEP) activity. This chain is Protein PLASTID TRANSCRIPTIONALLY ACTIVE 14, found in Arabidopsis thaliana (Mouse-ear cress).